The following is a 424-amino-acid chain: UDP-N-acetylglucosamine 1-carboxyvinyltransferase (424 aa).

Residue 22-23 (KN) participates in phosphoenolpyruvate binding. Arg98 provides a ligand contact to UDP-N-acetyl-alpha-D-glucosamine. Cys122 serves as the catalytic Proton donor. Cys122 carries the 2-(S-cysteinyl)pyruvic acid O-phosphothioketal modification. UDP-N-acetyl-alpha-D-glucosamine is bound by residues 127 to 131 (RPVDQ), Asp312, and Ile334.

It belongs to the EPSP synthase family. MurA subfamily.

Its subcellular location is the cytoplasm. The enzyme catalyses phosphoenolpyruvate + UDP-N-acetyl-alpha-D-glucosamine = UDP-N-acetyl-3-O-(1-carboxyvinyl)-alpha-D-glucosamine + phosphate. It participates in cell wall biogenesis; peptidoglycan biosynthesis. In terms of biological role, cell wall formation. Adds enolpyruvyl to UDP-N-acetylglucosamine. The sequence is that of UDP-N-acetylglucosamine 1-carboxyvinyltransferase from Xanthomonas euvesicatoria pv. vesicatoria (strain 85-10) (Xanthomonas campestris pv. vesicatoria).